The following is a 209-amino-acid chain: Peptide methionine sulfoxide reductase MsrA (209 aa).

Cysteine 51 is a catalytic residue.

It belongs to the MsrA Met sulfoxide reductase family.

The catalysed reaction is L-methionyl-[protein] + [thioredoxin]-disulfide + H2O = L-methionyl-(S)-S-oxide-[protein] + [thioredoxin]-dithiol. It carries out the reaction [thioredoxin]-disulfide + L-methionine + H2O = L-methionine (S)-S-oxide + [thioredoxin]-dithiol. Functionally, has an important function as a repair enzyme for proteins that have been inactivated by oxidation. Catalyzes the reversible oxidation-reduction of methionine sulfoxide in proteins to methionine. The sequence is that of Peptide methionine sulfoxide reductase MsrA from Vibrio vulnificus (strain CMCP6).